A 136-amino-acid polypeptide reads, in one-letter code: Protein PsiE (136 aa).

Transmembrane regions (helical) follow at residues 15–35 (ILQT…VVFL), 55–75 (YELV…ALIV), 82–102 (FHFP…RLII), and 108–128 (PLDV…LWLC).

The protein belongs to the PsiE family.

Its subcellular location is the cell inner membrane. This Escherichia coli O17:K52:H18 (strain UMN026 / ExPEC) protein is Protein PsiE.